The following is a 410-amino-acid chain: Neuroserpin (410 aa).

The N-terminal stretch at 1–16 (MAFLGLFSLLVLQSMA) is a signal peptide. Residues asparagine 157, asparagine 321, and asparagine 401 are each glycosylated (N-linked (GlcNAc...) asparagine). A glycan (O-linked (Xyl...) (chondroitin sulfate) serine) is linked at serine 403.

Belongs to the serpin family. In terms of assembly, monomer. Has a tendency to form large polymers already at 41 and 45 degrees Celsius (in vitro). As to expression, detected in brain cortex and hippocampus pyramidal neurons (at protein level). Detected in cerebrospinal fluid (at protein level). Predominantly expressed in the brain.

It is found in the secreted. It localises to the cytoplasmic vesicle. The protein resides in the secretory vesicle lumen. Its subcellular location is the perikaryon. Its function is as follows. Serine protease inhibitor that inhibits plasminogen activators and plasmin but not thrombin. May be involved in the formation or reorganization of synaptic connections as well as for synaptic plasticity in the adult nervous system. May protect neurons from cell damage by tissue-type plasminogen activator. This Homo sapiens (Human) protein is Neuroserpin (SERPINI1).